Consider the following 313-residue polypeptide: GTP cyclohydrolase 1 (313 aa).

Basic and acidic residues predominate over residues 1–10 (MAQETTRDGS). A disordered region spans residues 1-120 (MAQETTRDGS…SRGTRERLEE (120 aa)). The segment covering 11–20 (DSPSGSVSPP) has biased composition (low complexity). The segment covering 29–39 (KDKKSSKKRAH) has biased composition (basic residues). Over residues 40 to 64 (SSGERRSSVSKPARDPSDKPEESPS) the composition is skewed to basic and acidic residues. The segment covering 72 to 102 (TSSTAAAAVPSTITEEVSPSTSVTRSPSPVI) has biased composition (low complexity). 3 residues coordinate Zn(2+): Cys-202, His-205, and Cys-273.

The protein belongs to the GTP cyclohydrolase I family. As to quaternary structure, toroid-shaped homodecamer, composed of two pentamers of five dimers.

The enzyme catalyses GTP + H2O = 7,8-dihydroneopterin 3'-triphosphate + formate + H(+). The protein operates within cofactor biosynthesis; 7,8-dihydroneopterin triphosphate biosynthesis; 7,8-dihydroneopterin triphosphate from GTP: step 1/1. With respect to regulation, GTP shows a positive allosteric effect, and tetrahydrobiopterin inhibits the enzyme activity. Functionally, GTP cyclohydrolase 1 is the first enzyme in the biosynthetic pathway leading to folic acid. In Neurospora crassa (strain ATCC 24698 / 74-OR23-1A / CBS 708.71 / DSM 1257 / FGSC 987), this protein is GTP cyclohydrolase 1 (gch-1).